Consider the following 589-residue polypeptide: UvrABC system protein C (589 aa).

In terms of domain architecture, GIY-YIG spans 13–90; sequence PNPGCYLFKN…IKTHTPKYNF (78 aa). One can recognise a UVR domain in the interval 194–229; the sequence is KDILKKLHHLMQKASEKMFYEKAQEYRDIIDSIKQT.

Belongs to the UvrC family. As to quaternary structure, interacts with UvrB in an incision complex.

The protein resides in the cytoplasm. Functionally, the UvrABC repair system catalyzes the recognition and processing of DNA lesions. UvrC both incises the 5' and 3' sides of the lesion. The N-terminal half is responsible for the 3' incision and the C-terminal half is responsible for the 5' incision. This chain is UvrABC system protein C, found in Aster yellows witches'-broom phytoplasma (strain AYWB).